We begin with the raw amino-acid sequence, 88 residues long: Adenylosuccinate lyase (88 aa).

N(6)-(1,2-dicarboxyethyl)-AMP contacts are provided by residues 4 to 5 (RY) and 67 to 69 (KHD).

Belongs to the lyase 1 family. Adenylosuccinate lyase subfamily. In terms of assembly, homotetramer and homodimer. Residues from neighboring subunits contribute catalytic and substrate-binding residues to each active site.

It catalyses the reaction N(6)-(1,2-dicarboxyethyl)-AMP = fumarate + AMP. The catalysed reaction is (2S)-2-[5-amino-1-(5-phospho-beta-D-ribosyl)imidazole-4-carboxamido]succinate = 5-amino-1-(5-phospho-beta-D-ribosyl)imidazole-4-carboxamide + fumarate. The protein operates within purine metabolism; AMP biosynthesis via de novo pathway; AMP from IMP: step 2/2. Its pathway is purine metabolism; IMP biosynthesis via de novo pathway; 5-amino-1-(5-phospho-D-ribosyl)imidazole-4-carboxamide from 5-amino-1-(5-phospho-D-ribosyl)imidazole-4-carboxylate: step 2/2. Its function is as follows. Catalyzes two reactions in de novo purine nucleotide biosynthesis. Catalyzes the breakdown of 5-aminoimidazole- (N-succinylocarboxamide) ribotide (SAICAR or 2-[5-amino-1-(5-phospho-beta-D-ribosyl)imidazole-4-carboxamido]succinate) to 5-aminoimidazole-4-carboxamide ribotide (AICAR or 5-amino-1-(5-phospho-beta-D-ribosyl)imidazole-4-carboxamide) and fumarate, and of adenylosuccinate (ADS or N(6)-(1,2-dicarboxyethyl)-AMP) to adenosine monophosphate (AMP) and fumarate. The sequence is that of Adenylosuccinate lyase (purB) from Spiroplasma citri.